A 176-amino-acid polypeptide reads, in one-letter code: Crossover junction endodeoxyribonuclease RuvC (176 aa).

Catalysis depends on residues Asp-12, Glu-72, and Asp-144. Positions 12, 72, and 144 each coordinate Mg(2+).

Belongs to the RuvC family. Homodimer which binds Holliday junction (HJ) DNA. The HJ becomes 2-fold symmetrical on binding to RuvC with unstacked arms; it has a different conformation from HJ DNA in complex with RuvA. In the full resolvosome a probable DNA-RuvA(4)-RuvB(12)-RuvC(2) complex forms which resolves the HJ. Mg(2+) serves as cofactor.

It is found in the cytoplasm. The enzyme catalyses Endonucleolytic cleavage at a junction such as a reciprocal single-stranded crossover between two homologous DNA duplexes (Holliday junction).. The RuvA-RuvB-RuvC complex processes Holliday junction (HJ) DNA during genetic recombination and DNA repair. Endonuclease that resolves HJ intermediates. Cleaves cruciform DNA by making single-stranded nicks across the HJ at symmetrical positions within the homologous arms, yielding a 5'-phosphate and a 3'-hydroxyl group; requires a central core of homology in the junction. The consensus cleavage sequence is 5'-(A/T)TT(C/G)-3'. Cleavage occurs on the 3'-side of the TT dinucleotide at the point of strand exchange. HJ branch migration catalyzed by RuvA-RuvB allows RuvC to scan DNA until it finds its consensus sequence, where it cleaves and resolves the cruciform DNA. The sequence is that of Crossover junction endodeoxyribonuclease RuvC from Methylocella silvestris (strain DSM 15510 / CIP 108128 / LMG 27833 / NCIMB 13906 / BL2).